The primary structure comprises 343 residues: ATP phosphoribosyltransferase regulatory subunit (343 aa).

A disordered region spans residues 324–343 (RANGRAKRPARPRRSPPRPR). Residues 327–343 (GRAKRPARPRRSPPRPR) are compositionally biased toward basic residues.

The protein belongs to the class-II aminoacyl-tRNA synthetase family. HisZ subfamily. Heteromultimer composed of HisG and HisZ subunits.

It is found in the cytoplasm. The protein operates within amino-acid biosynthesis; L-histidine biosynthesis; L-histidine from 5-phospho-alpha-D-ribose 1-diphosphate: step 1/9. In terms of biological role, required for the first step of histidine biosynthesis. May allow the feedback regulation of ATP phosphoribosyltransferase activity by histidine. This is ATP phosphoribosyltransferase regulatory subunit from Anaeromyxobacter sp. (strain Fw109-5).